The chain runs to 221 residues: Eukaryotic translation initiation factor 3 subunit K (221 aa).

One can recognise a PCI domain in the interval 46 to 207 (YDLEANLACL…NIKTKHITEK (162 aa)).

It belongs to the eIF-3 subunit K family. Component of the eukaryotic translation initiation factor 3 (eIF-3) complex.

The protein localises to the cytoplasm. Functionally, component of the eukaryotic translation initiation factor 3 (eIF-3) complex, which is involved in protein synthesis of a specialized repertoire of mRNAs and, together with other initiation factors, stimulates binding of mRNA and methionyl-tRNAi to the 40S ribosome. The eIF-3 complex specifically targets and initiates translation of a subset of mRNAs involved in cell proliferation. This is Eukaryotic translation initiation factor 3 subunit K from Culex quinquefasciatus (Southern house mosquito).